The following is a 388-amino-acid chain: Mycinamicin VIII C21 methyl hydroxylase (388 aa).

Heme-binding residues include histidine 87, arginine 91, arginine 279, histidine 335, and cysteine 337.

Belongs to the cytochrome P450 family. It depends on heme as a cofactor.

The protein operates within antibiotic biosynthesis; mycinamicin biosynthesis. Its function is as follows. Involved in the biosynthesis of mycinamicin, a 16-membered macrolide antibiotic. Catalyzes hydroxylation at the C21 methyl group of mycinamicin VIII, the earliest macrolide form in the postpolyketide synthase tailoring pathway, leading to mycinamicin VII. Uses ferredoxin MycCII in electron transfer for catalysis. This is Mycinamicin VIII C21 methyl hydroxylase from Micromonospora griseorubida.